The primary structure comprises 400 residues: Glycerol-3-phosphate dehydrogenase [NAD(+)] 1, chloroplastic (400 aa).

The transit peptide at 1-32 (MRFRSFFFSSSIFSLSHSRSPSLSSSRFSSLS) directs the protein to the chloroplast. NAD(+) contacts are provided by residues 61-66 (GSGNWG), phenylalanine 92, phenylalanine 149, lysine 172, and alanine 205. Position 172 (lysine 172) interacts with substrate. The active-site Proton acceptor is the lysine 257. Arginine 321, lysine 350, and glutamine 352 together coordinate NAD(+). Residue 321-322 (RN) coordinates substrate.

Belongs to the NAD-dependent glycerol-3-phosphate dehydrogenase family. As to expression, expressed in young seedlings, flowers and siliques. Expressed at low levels in roots.

The protein resides in the plastid. Its subcellular location is the chloroplast. The catalysed reaction is sn-glycerol 3-phosphate + NAD(+) = dihydroxyacetone phosphate + NADH + H(+). Its pathway is membrane lipid metabolism; glycerophospholipid metabolism. In terms of biological role, involved in glycerolipid metabolism. This Arabidopsis thaliana (Mouse-ear cress) protein is Glycerol-3-phosphate dehydrogenase [NAD(+)] 1, chloroplastic (DHAPRD).